The sequence spans 659 residues: UvrABC system protein B (659 aa).

One can recognise a Helicase ATP-binding domain in the interval 25-182; the sequence is QSIENGNRGQ…KKLIEIQYER (158 aa). 38–45 lines the ATP pocket; it reads GVTGSGKT. Residues 91–114 carry the Beta-hairpin motif; that stretch reads YYDYYQPEAYVPQTDTFIEKDASI. In terms of domain architecture, Helicase C-terminal spans 429–582; sequence QIDDLYGEIQ…QMEYNEEHNI (154 aa). Residues 622-657 enclose the UVR domain; that stretch reads EKLIEQYEEEMKEAAKNLQFERAAELRDIIKDLKEN.

The protein belongs to the UvrB family. As to quaternary structure, forms a heterotetramer with UvrA during the search for lesions. Interacts with UvrC in an incision complex.

Its subcellular location is the cytoplasm. In terms of biological role, the UvrABC repair system catalyzes the recognition and processing of DNA lesions. A damage recognition complex composed of 2 UvrA and 2 UvrB subunits scans DNA for abnormalities. Upon binding of the UvrA(2)B(2) complex to a putative damaged site, the DNA wraps around one UvrB monomer. DNA wrap is dependent on ATP binding by UvrB and probably causes local melting of the DNA helix, facilitating insertion of UvrB beta-hairpin between the DNA strands. Then UvrB probes one DNA strand for the presence of a lesion. If a lesion is found the UvrA subunits dissociate and the UvrB-DNA preincision complex is formed. This complex is subsequently bound by UvrC and the second UvrB is released. If no lesion is found, the DNA wraps around the other UvrB subunit that will check the other stand for damage. The protein is UvrABC system protein B of Clostridium perfringens (strain SM101 / Type A).